Reading from the N-terminus, the 614-residue chain is Threonine--tRNA ligase (614 aa).

An editing domain region spans residues 1–138; the sequence is MRILTIHARK…PLSELSKTIR (138 aa). Catalytic stretches follow at residues 195–492 and 196–492; these read NRVN…PYIP and RVND…PYIP. Zn(2+) contacts are provided by Cys289, His340, and His461.

The protein belongs to the class-II aminoacyl-tRNA synthetase family. In terms of assembly, homodimer. The cofactor is Zn(2+).

Its subcellular location is the cytoplasm. The enzyme catalyses tRNA(Thr) + L-threonine + ATP = L-threonyl-tRNA(Thr) + AMP + diphosphate + H(+). In terms of biological role, catalyzes the attachment of threonine to tRNA(Thr) in a two-step reaction: L-threonine is first activated by ATP to form Thr-AMP and then transferred to the acceptor end of tRNA(Thr). Also edits incorrectly charged L-seryl-tRNA(Thr). In Staphylothermus marinus (strain ATCC 43588 / DSM 3639 / JCM 9404 / F1), this protein is Threonine--tRNA ligase.